The primary structure comprises 263 residues: H-2 class II histocompatibility antigen, A-U beta chain (263 aa).

A signal peptide spans methionine 1 to glycine 27. The interval glycine 28–leucine 120 is beta-1. Residues glycine 28–lysine 224 are Extracellular-facing. 2 cysteine pairs are disulfide-bonded: cysteine 42–cysteine 104 and cysteine 143–cysteine 199. N-linked (GlcNAc...) asparagine glycosylation occurs at asparagine 46. The tract at residues glutamate 121–tryptophan 214 is beta-2. The Ig-like C1-type domain occupies proline 123 to threonine 211. A connecting peptide region spans residues arginine 215–lysine 224. Residues methionine 225–isoleucine 245 form a helical membrane-spanning segment. The Cytoplasmic portion of the chain corresponds to arginine 246–glutamine 263.

The protein belongs to the MHC class II family.

The protein localises to the membrane. The protein is H-2 class II histocompatibility antigen, A-U beta chain of Mus musculus (Mouse).